Here is an 883-residue protein sequence, read N- to C-terminus: Phosphoenolpyruvate carboxylase (883 aa).

Catalysis depends on residues histidine 138 and lysine 546.

It belongs to the PEPCase type 1 family. Mg(2+) serves as cofactor.

The enzyme catalyses oxaloacetate + phosphate = phosphoenolpyruvate + hydrogencarbonate. Forms oxaloacetate, a four-carbon dicarboxylic acid source for the tricarboxylic acid cycle. The polypeptide is Phosphoenolpyruvate carboxylase (Salmonella gallinarum (strain 287/91 / NCTC 13346)).